We begin with the raw amino-acid sequence, 221 residues long: 5'-nucleotidase (221 aa).

Residue Asp-14 is the Nucleophile of the active site.

Belongs to the HAD-like hydrolase superfamily. Requires Mn(2+) as cofactor. It depends on Mg(2+) as a cofactor.

It carries out the reaction a ribonucleoside 5'-phosphate + H2O = a ribonucleoside + phosphate. Specifically dephosphorylates nucleoside 5'-monophosphates to nucleosides and inorganic phosphate. Displays high activity toward 5'-UMP and 5'-IMP, significant activity against 5'-XMP and 5'-TMP, and low activity against 5'-CMP. The chain is 5'-nucleotidase from Pseudomonas aeruginosa (strain ATCC 15692 / DSM 22644 / CIP 104116 / JCM 14847 / LMG 12228 / 1C / PRS 101 / PAO1).